Here is a 1374-residue protein sequence, read N- to C-terminus: Ribonuclease 3 (1374 aa).

3 disordered regions span residues Met1–Pro95, Pro130–Glu406, and Leu452–Ser497. A compositionally biased stretch (polar residues) spans Pro59–Ala68. 2 stretches are compositionally biased toward pro residues: residues Asn70–Pro95 and Met145–Met160. Positions Phe182–Pro202 are enriched in low complexity. Basic and acidic residues-rich tracts occupy residues Pro216–Arg289 and Arg298–Arg313. Residues Ser355 and Ser373 each carry the phosphoserine modification. Residues Arg364–Lys399 show a composition bias toward basic and acidic residues. The segment at Lys390–Glu1365 is necessary for interaction with DGCR8 and pri-miRNA processing activity. Positions Glu475–Ser491 are enriched in acidic residues. Zn(2+)-binding residues include Cys536, Cys538, His549, Cys561, His609, Cys676, and His680. RNase III domains follow at residues Leu876–Ser1056 and Leu1107–Asp1233. Position 969 (Glu969) interacts with Mg(2+). His1026 contacts Zn(2+). Mg(2+)-binding residues include Asn1042, Glu1045, Glu1147, Asp1219, and Glu1222. Positions Asp1260–Phe1334 constitute a DRBM domain.

This sequence belongs to the ribonuclease III family. Component of the microprocessor complex, or pri-miRNA processing protein complex, which is composed of DROSHA and DGCR8. The microprocessor complex is a heterotrimer; each of the two DROSHA RNase III domains binds one DGCR8 (via C-terminal region). Interacts with SP1 and SNIP1. Interacts with SRRT/ARS2. Interacts with CPSF3 and ISY1; this interaction is in an RNA dependent manner. Interacts with PUS10; interaction promotes pri-miRNAs processing. The cofactor is Mg(2+). Mn(2+) is required as a cofactor. Degraded by autophagy in response to neuronal activity in motor neurons. In terms of tissue distribution, ubiquitous.

The protein localises to the nucleus. Its subcellular location is the nucleolus. It localises to the cytoplasm. It carries out the reaction Endonucleolytic cleavage to 5'-phosphomonoester.. Ribonuclease III double-stranded (ds) RNA-specific endoribonuclease that is involved in the initial step of microRNA (miRNA) biogenesis. Component of the microprocessor complex that is required to process primary miRNA transcripts (pri-miRNAs) to release precursor miRNA (pre-miRNA) in the nucleus. Within the microprocessor complex, DROSHA cleaves the 3' and 5' strands of a stem-loop in pri-miRNAs (processing center 11 bp from the dsRNA-ssRNA junction) to release hairpin-shaped pre-miRNAs that are subsequently cut by the cytoplasmic DICER to generate mature miRNAs. Involved also in pre-rRNA processing. Cleaves double-strand RNA and does not cleave single-strand RNA. Involved in the formation of GW bodies. Plays a role in growth homeostasis in response to autophagy in motor neurons. The sequence is that of Ribonuclease 3 (DROSHA) from Homo sapiens (Human).